We begin with the raw amino-acid sequence, 354 residues long: Photosystem II D2 protein (354 aa).

Thr-2 bears the N-acetylthreonine mark. Thr-2 carries the post-translational modification Phosphothreonine. A helical membrane pass occupies residues 42 to 62; that stretch reads CAYFALGGWFTGTTFVTSWYT. Chlorophyll a is bound at residue His-119. A helical membrane pass occupies residues 126 to 142; it reads GFMLRQFELARSVQLRP. Positions 131 and 144 each coordinate pheophytin a. The chain crosses the membrane as a helical span at residues 154–167; the sequence is VFVSVFLIYPLGQS. His-199 contributes to the chlorophyll a binding site. The helical transmembrane segment at 209–229 threads the bilayer; the sequence is AALLCAIHGATVENTLFEDGD. Residues His-216 and Phe-263 each coordinate a plastoquinone. His-216 is a Fe cation binding site. Position 270 (His-270) interacts with Fe cation. Residues 280–296 traverse the membrane as a helical segment; the sequence is GLWMSALGVVGLALNLR.

Belongs to the reaction center PufL/M/PsbA/D family. In terms of assembly, PSII is composed of 1 copy each of membrane proteins PsbA, PsbB, PsbC, PsbD, PsbE, PsbF, PsbH, PsbI, PsbJ, PsbK, PsbL, PsbM, PsbT, PsbX, PsbY, PsbZ, Psb30/Ycf12, at least 3 peripheral proteins of the oxygen-evolving complex and a large number of cofactors. It forms dimeric complexes. Requires The D1/D2 heterodimer binds P680, chlorophylls that are the primary electron donor of PSII, and subsequent electron acceptors. It shares a non-heme iron and each subunit binds pheophytin, quinone, additional chlorophylls, carotenoids and lipids. There is also a Cl(-1) ion associated with D1 and D2, which is required for oxygen evolution. The PSII complex binds additional chlorophylls, carotenoids and specific lipids. as cofactor.

The protein resides in the plastid. It localises to the chloroplast thylakoid membrane. The enzyme catalyses 2 a plastoquinone + 4 hnu + 2 H2O = 2 a plastoquinol + O2. In terms of biological role, photosystem II (PSII) is a light-driven water:plastoquinone oxidoreductase that uses light energy to abstract electrons from H(2)O, generating O(2) and a proton gradient subsequently used for ATP formation. It consists of a core antenna complex that captures photons, and an electron transfer chain that converts photonic excitation into a charge separation. The D1/D2 (PsbA/PsbD) reaction center heterodimer binds P680, the primary electron donor of PSII as well as several subsequent electron acceptors. D2 is needed for assembly of a stable PSII complex. This chain is Photosystem II D2 protein, found in Piper cenocladum (Ant piper).